The primary structure comprises 384 residues: Deoxyguanosinetriphosphate triphosphohydrolase-like protein (384 aa).

Residues 62-198 (RLTHSLEVST…AALADDISYI (137 aa)) enclose the HD domain.

The protein belongs to the dGTPase family. Type 2 subfamily.

In Rickettsia peacockii (strain Rustic), this protein is Deoxyguanosinetriphosphate triphosphohydrolase-like protein.